Reading from the N-terminus, the 401-residue chain is Tryptophan synthase beta chain (401 aa).

Position 88 is an N6-(pyridoxal phosphate)lysine (Lys88).

It belongs to the TrpB family. Tetramer of two alpha and two beta chains. Requires pyridoxal 5'-phosphate as cofactor.

The enzyme catalyses (1S,2R)-1-C-(indol-3-yl)glycerol 3-phosphate + L-serine = D-glyceraldehyde 3-phosphate + L-tryptophan + H2O. It functions in the pathway amino-acid biosynthesis; L-tryptophan biosynthesis; L-tryptophan from chorismate: step 5/5. In terms of biological role, the beta subunit is responsible for the synthesis of L-tryptophan from indole and L-serine. The sequence is that of Tryptophan synthase beta chain from Shewanella denitrificans (strain OS217 / ATCC BAA-1090 / DSM 15013).